A 492-amino-acid polypeptide reads, in one-letter code: UDP-N-acetylmuramoyl-L-alanyl-D-glutamate--2,6-diaminopimelate ligase (492 aa).

UDP-N-acetyl-alpha-D-muramoyl-L-alanyl-D-glutamate is bound at residue serine 30. 114–120 (GTNGKTS) lines the ATP pocket. UDP-N-acetyl-alpha-D-muramoyl-L-alanyl-D-glutamate contacts are provided by residues 156–157 (TT), serine 183, glutamine 189, and arginine 191. Lysine 223 carries the N6-carboxylysine modification. Meso-2,6-diaminopimelate contacts are provided by residues arginine 389, 413 to 416 (DNPR), glycine 462, and glutamate 466. The Meso-diaminopimelate recognition motif motif lies at 413-416 (DNPR).

The protein belongs to the MurCDEF family. MurE subfamily. Mg(2+) serves as cofactor. In terms of processing, carboxylation is probably crucial for Mg(2+) binding and, consequently, for the gamma-phosphate positioning of ATP.

The protein resides in the cytoplasm. It carries out the reaction UDP-N-acetyl-alpha-D-muramoyl-L-alanyl-D-glutamate + meso-2,6-diaminopimelate + ATP = UDP-N-acetyl-alpha-D-muramoyl-L-alanyl-gamma-D-glutamyl-meso-2,6-diaminopimelate + ADP + phosphate + H(+). Its pathway is cell wall biogenesis; peptidoglycan biosynthesis. In terms of biological role, catalyzes the addition of meso-diaminopimelic acid to the nucleotide precursor UDP-N-acetylmuramoyl-L-alanyl-D-glutamate (UMAG) in the biosynthesis of bacterial cell-wall peptidoglycan. The sequence is that of UDP-N-acetylmuramoyl-L-alanyl-D-glutamate--2,6-diaminopimelate ligase from Neisseria meningitidis serogroup B (strain ATCC BAA-335 / MC58).